We begin with the raw amino-acid sequence, 77 residues long: Small ribosomal subunit protein bS20 (77 aa).

The protein belongs to the bacterial ribosomal protein bS20 family.

Functionally, binds directly to 16S ribosomal RNA. The protein is Small ribosomal subunit protein bS20 of Lactococcus lactis subsp. cremoris (strain MG1363).